The sequence spans 146 residues: Hemoglobin subunit beta (146 aa).

The residue at position 1 (valine 1) is an N-acetylvaline. In terms of domain architecture, Globin spans histidine 2 to histidine 146. Threonine 12 is subject to Phosphothreonine. The residue at position 44 (serine 44) is a Phosphoserine. Residue lysine 59 is modified to N6-acetyllysine. Heme b is bound at residue histidine 63. N6-acetyllysine is present on lysine 82. Histidine 92 contributes to the heme b binding site. Cysteine 93 carries the S-nitrosocysteine modification. At lysine 144 the chain carries N6-acetyllysine.

This sequence belongs to the globin family. In terms of assembly, heterotetramer of two alpha chains and two beta chains. In terms of tissue distribution, red blood cells.

Involved in oxygen transport from the lung to the various peripheral tissues. The sequence is that of Hemoglobin subunit beta (HBB) from Loris tardigradus (Slender loris).